We begin with the raw amino-acid sequence, 131 residues long: D-ribose pyranase (131 aa).

The active-site Proton donor is histidine 20. Substrate contacts are provided by residues aspartate 28, histidine 98, and tyrosine 120 to asparagine 122.

The protein belongs to the RbsD / FucU family. RbsD subfamily. In terms of assembly, homodecamer.

It is found in the cytoplasm. It carries out the reaction beta-D-ribopyranose = beta-D-ribofuranose. It participates in carbohydrate metabolism; D-ribose degradation; D-ribose 5-phosphate from beta-D-ribopyranose: step 1/2. Catalyzes the interconversion of beta-pyran and beta-furan forms of D-ribose. This chain is D-ribose pyranase, found in Bacillus cytotoxicus (strain DSM 22905 / CIP 110041 / 391-98 / NVH 391-98).